Consider the following 147-residue polypeptide: Small ribosomal subunit protein bS6 (147 aa).

The interval 114 to 147 (GKGTRAAEQAAAAEAAAPAAAPAEPASAEPAPAV) is disordered. A compositionally biased stretch (low complexity) spans 119 to 147 (AAEQAAAAEAAAPAAAPAEPASAEPAPAV).

Belongs to the bacterial ribosomal protein bS6 family.

In terms of biological role, binds together with bS18 to 16S ribosomal RNA. The sequence is that of Small ribosomal subunit protein bS6 from Koribacter versatilis (strain Ellin345).